The following is a 440-amino-acid chain: Cell division protein FtsA (440 aa).

The segment at 396–440 is disordered; sequence VSSSEEQEQHHHQNEVQQRPKGKQKTQAEHNKQSKMKKLLSMFWE.

This sequence belongs to the FtsA/MreB family. As to quaternary structure, homodimer. Interacts with FtsZ.

It is found in the cell membrane. Cell division protein that is required for the assembly of the Z ring. May serve as a membrane anchor for the Z ring. Binds and hydrolyzes ATP. Also involved in sporulation. The sequence is that of Cell division protein FtsA from Bacillus subtilis (strain 168).